Consider the following 310-residue polypeptide: Ribosomal RNA small subunit methyltransferase H (310 aa).

S-adenosyl-L-methionine-binding positions include 32 to 34 (GGH), D52, F79, D100, and Q107.

Belongs to the methyltransferase superfamily. RsmH family.

The protein localises to the cytoplasm. It catalyses the reaction cytidine(1402) in 16S rRNA + S-adenosyl-L-methionine = N(4)-methylcytidine(1402) in 16S rRNA + S-adenosyl-L-homocysteine + H(+). Specifically methylates the N4 position of cytidine in position 1402 (C1402) of 16S rRNA. The polypeptide is Ribosomal RNA small subunit methyltransferase H (Bacillus anthracis (strain A0248)).